The sequence spans 127 residues: DNA-directed RNA polymerase subunit omega (127 aa).

Belongs to the RNA polymerase subunit omega family. As to quaternary structure, the RNAP catalytic core consists of 2 alpha, 1 beta, 1 beta' and 1 omega subunit. When a sigma factor is associated with the core the holoenzyme is formed, which can initiate transcription.

The catalysed reaction is RNA(n) + a ribonucleoside 5'-triphosphate = RNA(n+1) + diphosphate. Its function is as follows. Promotes RNA polymerase assembly. Latches the N- and C-terminal regions of the beta' subunit thereby facilitating its interaction with the beta and alpha subunits. This Rickettsia rickettsii (strain Iowa) protein is DNA-directed RNA polymerase subunit omega.